Here is a 400-residue protein sequence, read N- to C-terminus: Argininosuccinate synthase (400 aa).

ATP is bound at residue 8–16 (AYSGGLDTS). L-citrulline-binding residues include Y86 and S91. G116 contacts ATP. The L-aspartate site is built by T118, N122, and D123. N122 provides a ligand contact to L-citrulline. The L-citrulline site is built by R126, S175, S184, E260, and Y272.

This sequence belongs to the argininosuccinate synthase family. Type 1 subfamily. In terms of assembly, homotetramer.

The protein localises to the cytoplasm. The enzyme catalyses L-citrulline + L-aspartate + ATP = 2-(N(omega)-L-arginino)succinate + AMP + diphosphate + H(+). It participates in amino-acid biosynthesis; L-arginine biosynthesis; L-arginine from L-ornithine and carbamoyl phosphate: step 2/3. In Clostridium acetobutylicum (strain ATCC 824 / DSM 792 / JCM 1419 / IAM 19013 / LMG 5710 / NBRC 13948 / NRRL B-527 / VKM B-1787 / 2291 / W), this protein is Argininosuccinate synthase.